The chain runs to 141 residues: Hemoglobin subunit alpha-A (141 aa).

A Globin domain is found at 1–141; it reads MLSASDKANV…VGLVLTAKYR (141 aa). Residue His-58 coordinates O2. Residue His-87 coordinates heme b.

It belongs to the globin family. There are three forms of hemoglobin in Sphenodon: A, A' and D. Hb A is a tetramer of two alpha-A and two beta-1, Hb A' is a tetramer of two alpha-a and two beta-2, Hb D is a tetramer of two alpha-D and two beta-2. In terms of tissue distribution, red blood cells.

In terms of biological role, involved in oxygen transport from the lung to the various peripheral tissues. The polypeptide is Hemoglobin subunit alpha-A (HBAA) (Sphenodon punctatus (Tuatara)).